Reading from the N-terminus, the 688-residue chain is TBC1 domain family member 25 (688 aa).

The interval 1–27 (MATASGASDLSGSGAPPPGVGAQAAAA) is disordered. A Phosphoserine modification is found at serine 140. A Phosphothreonine modification is found at threonine 160. Residues 228–434 (GVEPSLRKVV…RMLEVTWSSL (207 aa)) form the Rab-GAP TBC domain. At serine 506 the chain carries Phosphoserine. The segment covering 544–567 (LNSPDPLLSSFSHPDSPSSSSPPS) has biased composition (low complexity). The tract at residues 544 to 606 (LNSPDPLLSS…LPPVPPMGLP (63 aa)) is disordered. Over residues 596–606 (SLPPVPPMGLP) the composition is skewed to pro residues.

In terms of assembly, interacts (via N-terminus) with MAP1LC3B, GABARAP and GABARAPL2.

Its subcellular location is the cytoplasm. It localises to the cytoplasmic vesicle. The protein localises to the autophagosome. In terms of biological role, acts as a GTPase-activating protein specific for RAB33B. Involved in the regulation of autophagosome maturation, the process in which autophagosomes fuse with endosomes and lysosomes. The protein is TBC1 domain family member 25 (TBC1D25) of Homo sapiens (Human).